Here is a 101-residue protein sequence, read N- to C-terminus: RNA-binding protein Hfq (101 aa).

The Sm domain occupies 9–68 (DPFLNALRRERVPVSIYLVNGIKLQGQVESFDQFVILLKNTVSQMVYKHAISTVVPSRPV). Residues 63 to 101 (VPSRPVSHHSNNPSGSTNNYHGSNPSAPQQPQQDSDDAE) are disordered. Residues 70–86 (HHSNNPSGSTNNYHGSN) show a composition bias toward polar residues.

It belongs to the Hfq family. Homohexamer.

Its function is as follows. RNA chaperone that binds small regulatory RNA (sRNAs) and mRNAs to facilitate mRNA translational regulation in response to envelope stress, environmental stress and changes in metabolite concentrations. Also binds with high specificity to tRNAs. Positively regulates the expression of the yst gene for heat-stable enterotoxin (Y-ST). In Yersinia enterocolitica, this protein is RNA-binding protein Hfq.